Reading from the N-terminus, the 573-residue chain is Sulfate adenylyltransferase (573 aa).

Residues 1–169 (MANSPHGGVL…IEAVNKLNHY (169 aa)) are N-terminal. The tract at residues 170–394 (DYVALRYTPA…LRESSPPRHT (225 aa)) is catalytic. Residue Q197 coordinates sulfate. Residues 197 to 200 (QTRN) and 291 to 294 (GRDH) each bind ATP. Residues T198, R199, and N200 contribute to the active site. R199 provides a ligand contact to sulfate. Sulfate is bound at residue A295. An ATP-binding site is contributed by V333. Residues 395-573 (QGFTVFLTGY…LETEGFFDRA (179 aa)) form an allosteric regulation domain; adenylyl-sulfate kinase-like region. 3'-phosphoadenylyl sulfate is bound by residues 434–437 (DTVR), R451, 477–478 (IA), and R515.

It in the N-terminal section; belongs to the sulfate adenylyltransferase family. The protein in the C-terminal section; belongs to the APS kinase family. In terms of assembly, homohexamer. Dimer of trimers.

It localises to the cytoplasm. It carries out the reaction sulfate + ATP + H(+) = adenosine 5'-phosphosulfate + diphosphate. The protein operates within sulfur metabolism; hydrogen sulfide biosynthesis; sulfite from sulfate: step 1/3. Its activity is regulated as follows. Allosterically inhibited by 3'-phosphoadenosine 5'-phosphosulfate (PAPS). Functionally, catalyzes the first intracellular reaction of sulfate assimilation, forming adenosine-5'-phosphosulfate (APS) from inorganic sulfate and ATP. Plays an important role in sulfate activation as a component of the biosynthesis pathway of sulfur-containing amino acids. This chain is Sulfate adenylyltransferase, found in Aspergillus oryzae (strain ATCC 42149 / RIB 40) (Yellow koji mold).